A 309-amino-acid chain; its full sequence is Wall-associated proteinase (309 aa).

Residues asparagine 190 and asparagine 295 are each glycosylated (N-linked (GlcNAc...) asparagine).

It is found in the secreted. It localises to the cell wall. The protein resides in the membrane. Its function is as follows. May participate in wall plasticization and/or intussusception or in cell wall turnover. This is Wall-associated proteinase from Coccidioides immitis (strain RS) (Valley fever fungus).